Consider the following 131-residue polypeptide: Histone H3-like 4 (131 aa).

Lys-10 is subject to N6,N6,N6-trimethyllysine; alternate. Lys-10 carries the N6,N6-dimethyllysine; alternate modification. Lys-10 is modified (N6-acetyllysine; alternate). Lys-10 bears the N6-methyllysine; alternate mark. Position 12 is a phosphothreonine (Thr-12). The residue at position 15 (Lys-15) is an N6-acetyllysine. Ser-27 carries the phosphoserine modification. The residue at position 32 (Lys-32) is an N6,N6,N6-trimethyllysine; alternate. Residue Lys-32 is modified to N6,N6-dimethyllysine; alternate. Lys-32 carries the post-translational modification N6-methyllysine; alternate.

This sequence belongs to the histone H3 family. The nucleosome is a histone octamer containing two molecules each of H2A, H2B, H3 and H4 assembled in one H3-H4 heterotetramer and two H2A-H2B heterodimers. The octamer wraps approximately 147 bp of DNA. As to expression, expressed in roots, seedlings, leaves buds and open flowers.

Its subcellular location is the nucleus. The protein localises to the chromosome. Functionally, core component of nucleosome. Nucleosomes wrap and compact DNA into chromatin, limiting DNA accessibility to the cellular machineries which require DNA as a template. Histones thereby play a central role in transcription regulation, DNA repair, DNA replication and chromosomal stability. DNA accessibility is regulated via a complex set of post-translational modifications of histones, also called histone code, and nucleosome remodeling. In Arabidopsis thaliana (Mouse-ear cress), this protein is Histone H3-like 4.